A 131-amino-acid chain; its full sequence is Leptin receptor overlapping transcript-like 1 (131 aa).

The next 4 helical transmembrane spans lie at 7–27 (LISL…GCAL), 32–52 (QYWP…YCIA), 69–89 (LAIF…VVFA), and 100–120 (ALVL…FLVF).

Belongs to the OB-RGRP/VPS55 family. Interacts with RAB13.

It is found in the membrane. Negatively regulates growth hormone (GH) receptor cell surface expression in liver. May play a role in liver resistance to GH during periods of reduced nutrient availability. The polypeptide is Leptin receptor overlapping transcript-like 1 (Leprotl1) (Rattus norvegicus (Rat)).